The sequence spans 540 residues: Chaperonin GroEL 2 (540 aa).

Residues 30–33 (TLGP), K51, 87–91 (DGTTT), G415, 479–481 (NAA), and D495 contribute to the ATP site.

This sequence belongs to the chaperonin (HSP60) family. In terms of assembly, forms a cylinder of 14 subunits composed of two heptameric rings stacked back-to-back. Interacts with the co-chaperonin GroES.

It localises to the cytoplasm. The enzyme catalyses ATP + H2O + a folded polypeptide = ADP + phosphate + an unfolded polypeptide.. Its function is as follows. Together with its co-chaperonin GroES, plays an essential role in assisting protein folding. The GroEL-GroES system forms a nano-cage that allows encapsulation of the non-native substrate proteins and provides a physical environment optimized to promote and accelerate protein folding. The sequence is that of Chaperonin GroEL 2 from Burkholderia vietnamiensis (strain G4 / LMG 22486) (Burkholderia cepacia (strain R1808)).